A 375-amino-acid chain; its full sequence is Alcohol dehydrogenase 1A (375 aa).

The residue at position 1 (G1) is an N-acetylglycine. Residues C46, H67, C97, C100, C103, C111, and C174 each contribute to the Zn(2+) site. Residues 199 to 204 (GLGGVG), D223, K228, 293 to 295 (VGL), and R370 each bind NAD(+).

Belongs to the zinc-containing alcohol dehydrogenase family. Class-I subfamily. Multimeric (with different ratios of monomers). Zn(2+) is required as a cofactor.

The protein localises to the cytoplasm. It catalyses the reaction a primary alcohol + NAD(+) = an aldehyde + NADH + H(+). The enzyme catalyses a secondary alcohol + NAD(+) = a ketone + NADH + H(+). This Saara hardwickii (Indian spiny-tailed lizard) protein is Alcohol dehydrogenase 1A.